A 410-amino-acid chain; its full sequence is D-amino acid dehydrogenase (410 aa).

9-14 is an FAD binding site; that stretch reads GGGIVG.

Belongs to the DadA oxidoreductase family. The cofactor is FAD.

The protein resides in the cell inner membrane. The catalysed reaction is a D-alpha-amino acid + a quinone + H2O = a 2-oxocarboxylate + a quinol + NH4(+). In terms of biological role, catalyzes the oxidative deamination of D-amino acids. Has broad substrate specificity; is mostly active on D-proline, and to a lesser extent, on several other D-amino acids such as D-alanine, D-phenylalanine and D-serine. Mediates electron transport from D-proline to coenzyme Q1 in vitro, and is involved in the electron transport chain from D-proline to the c-type cytochrome in vivo. In Helicobacter pylori (strain J99 / ATCC 700824) (Campylobacter pylori J99), this protein is D-amino acid dehydrogenase.